The sequence spans 83 residues: UPF0729 protein CBG02799 (83 aa).

The interval 51–83 is disordered; the sequence is QEKKEEEEEKEKSCCSTEAENTTEVTTETKKDQ. The span at 67–76 shows a compositional bias: low complexity; that stretch reads TEAENTTEVT.

Belongs to the UPF0729 family.

The chain is UPF0729 protein CBG02799 from Caenorhabditis briggsae.